The primary structure comprises 92 residues: Small ribosomal subunit protein uS19 (92 aa).

It belongs to the universal ribosomal protein uS19 family.

In terms of biological role, protein S19 forms a complex with S13 that binds strongly to the 16S ribosomal RNA. This Shewanella halifaxensis (strain HAW-EB4) protein is Small ribosomal subunit protein uS19.